A 138-amino-acid chain; its full sequence is 10 kDa chaperonin 1, chloroplastic (138 aa).

A chloroplast-targeting transit peptide spans 1–61 (MASSFITVPK…VPQADRVLVR (61 aa)). The tract at residues 50 to 137 (KVVPQADRVL…CKESDLLAIV (88 aa)) is cpn-10 domain.

Belongs to the GroES chaperonin family. In terms of tissue distribution, expressed at low levels in germinating seeds, seedlings, rosettes leaves, flowers and siliques.

The protein localises to the plastid. It localises to the chloroplast. Functionally, functions as a co-chaperone for protein folding in chloroplasts. The protein is 10 kDa chaperonin 1, chloroplastic of Arabidopsis thaliana (Mouse-ear cress).